The following is a 905-amino-acid chain: Heme/hemopexin-binding protein (905 aa).

The signal sequence occupies residues 1–21 (MYKLNVISLIILTTYTGATYA).

Its subcellular location is the secreted. Its function is as follows. Binds heme/hemopexin complexes. The polypeptide is Heme/hemopexin-binding protein (hxuA) (Haemophilus influenzae (strain ATCC 51907 / DSM 11121 / KW20 / Rd)).